The following is a 445-amino-acid chain: Methionine aminopeptidase 2-1 (445 aa).

Residues 1-99 are disordered; it reads MAAQVPTEAL…FPNKAYPKGE (99 aa). Positions 61–75 are enriched in basic residues; that stretch reads KKKKKRKPKKKKKHP. Residue His198 participates in substrate binding. Positions 218, 229, and 298 each coordinate a divalent metal cation. His306 contributes to the substrate binding site. A divalent metal cation is bound by residues Glu331 and Glu426.

This sequence belongs to the peptidase M24A family. Methionine aminopeptidase eukaryotic type 2 subfamily. Requires Co(2+) as cofactor. It depends on Zn(2+) as a cofactor. Mn(2+) serves as cofactor. The cofactor is Fe(2+).

The protein resides in the cytoplasm. The catalysed reaction is Release of N-terminal amino acids, preferentially methionine, from peptides and arylamides.. Cotranslationally removes the N-terminal methionine from nascent proteins. The N-terminal methionine is often cleaved when the second residue in the primary sequence is small and uncharged (Met-Ala-, Cys, Gly, Pro, Ser, Thr, or Val). This chain is Methionine aminopeptidase 2-1, found in Fusarium vanettenii (strain ATCC MYA-4622 / CBS 123669 / FGSC 9596 / NRRL 45880 / 77-13-4) (Fusarium solani subsp. pisi).